Here is a 1374-residue protein sequence, read N- to C-terminus: DNA-directed RNA polymerase subunit beta (1374 aa).

This sequence belongs to the RNA polymerase beta chain family. The RNAP catalytic core consists of 2 alpha, 1 beta, 1 beta' and 1 omega subunit. When a sigma factor is associated with the core the holoenzyme is formed, which can initiate transcription.

It carries out the reaction RNA(n) + a ribonucleoside 5'-triphosphate = RNA(n+1) + diphosphate. Its function is as follows. DNA-dependent RNA polymerase catalyzes the transcription of DNA into RNA using the four ribonucleoside triphosphates as substrates. The sequence is that of DNA-directed RNA polymerase subunit beta from Methylobacterium radiotolerans (strain ATCC 27329 / DSM 1819 / JCM 2831 / NBRC 15690 / NCIMB 10815 / 0-1).